We begin with the raw amino-acid sequence, 260 residues long: Methylphosphonate hydroxylase (260 aa).

Residue Lys-107 coordinates 2-oxoglutarate. Residues His-117, Asp-119, and His-195 each coordinate Fe cation.

It belongs to the PhyH family. Fe(2+) serves as cofactor.

The enzyme catalyses methylphosphonate + 2-oxoglutarate + O2 = hydroxymethylphosphonate + succinate + CO2. In terms of biological role, part of an oxidative pathway for utilization of methylphosphonic acid as a phosphate source. Catalyzes the conversion of methylphosphonic acid to hydroxymethylphosphonic acid. Is specific for the hydroxylation of methylphosphonate. In Gimesia maris (strain ATCC 29201 / DSM 8797 / 534-30) (Planctomyces maris), this protein is Methylphosphonate hydroxylase.